The following is a 340-amino-acid chain: Probable dual-specificity RNA methyltransferase RlmN (340 aa).

Catalysis depends on Glu-91, which acts as the Proton acceptor. A Radical SAM core domain is found at 97–326; sequence HSGRVTACIS…CEIRKEKGTD (230 aa). Cys-104 and Cys-331 form a disulfide bridge. The [4Fe-4S] cluster site is built by Cys-111, Cys-115, and Cys-118. Residues 158-159, Ser-190, 213-215, and Asn-289 contribute to the S-adenosyl-L-methionine site; these read GE and SLH. Cys-331 (S-methylcysteine intermediate) is an active-site residue.

The protein belongs to the radical SAM superfamily. RlmN family. [4Fe-4S] cluster serves as cofactor.

Its subcellular location is the cytoplasm. It catalyses the reaction adenosine(2503) in 23S rRNA + 2 reduced [2Fe-2S]-[ferredoxin] + 2 S-adenosyl-L-methionine = 2-methyladenosine(2503) in 23S rRNA + 5'-deoxyadenosine + L-methionine + 2 oxidized [2Fe-2S]-[ferredoxin] + S-adenosyl-L-homocysteine. It carries out the reaction adenosine(37) in tRNA + 2 reduced [2Fe-2S]-[ferredoxin] + 2 S-adenosyl-L-methionine = 2-methyladenosine(37) in tRNA + 5'-deoxyadenosine + L-methionine + 2 oxidized [2Fe-2S]-[ferredoxin] + S-adenosyl-L-homocysteine. Functionally, specifically methylates position 2 of adenine 2503 in 23S rRNA and position 2 of adenine 37 in tRNAs. The sequence is that of Probable dual-specificity RNA methyltransferase RlmN from Thermosipho melanesiensis (strain DSM 12029 / CIP 104789 / BI429).